A 257-amino-acid polypeptide reads, in one-letter code: Probable S-adenosylmethionine-dependent methyltransferase MSMEG_2350/MSMEI_2290 (257 aa).

This sequence belongs to the methyltransferase superfamily.

Its function is as follows. Probable S-adenosylmethionine-dependent methyltransferase required for the 6-O-methylation of the polysaccharide backbone of 6-O-methylglucosyl lipopolysaccharides (MGLP). This Mycolicibacterium smegmatis (strain ATCC 700084 / mc(2)155) (Mycobacterium smegmatis) protein is Probable S-adenosylmethionine-dependent methyltransferase MSMEG_2350/MSMEI_2290.